The sequence spans 69 residues: uncharacterized protein (69 aa).

Over 1–15 (MLLYIVIIVACIISK) the chain is Cytoplasmic. The chain crosses the membrane as a helical span at residues 16 to 36 (LVPNEYWAIHLFFIIMIFMVY). Residues 37 to 69 (MYEKLDIHQKYQFWNYTMSGLSGHNVQVICKCY) are Extracellular-facing. Residue N51 is glycosylated (N-linked (GlcNAc...) asparagine; by host).

The protein belongs to the asfivirus X69R family.

The protein localises to the host membrane. This is an uncharacterized protein from Ornithodoros (relapsing fever ticks).